Here is an 83-residue protein sequence, read N- to C-terminus: UPF0729 protein CBG02799 (83 aa).

The interval 51–83 (QEKKEEEEEKEKSCCSTEAENTTEVTTETKKDQ) is disordered. The segment covering 67-76 (TEAENTTEVT) has biased composition (low complexity).

This sequence belongs to the UPF0729 family.

This chain is UPF0729 protein CBG02799, found in Caenorhabditis briggsae.